We begin with the raw amino-acid sequence, 250 residues long: Entry-fusion complex associated protein OPG095 (250 aa).

Residue Gly-2 is the site of N-myristoyl glycine; by host attachment. Positions 2–12 (GAAASIQTTVN) are targeting to MV membrane. The Virion surface segment spans residues 2–183 (GAAASIQTTV…IAPRQVAGTG (182 aa)). 3 disulfides stabilise this stretch: Cys-34/Cys-57, Cys-49/Cys-136, and Cys-116/Cys-158. Residues 184-204 (VQFYMIVIGVIILAALFMYYA) traverse the membrane as a helical segment. The Intravirion segment spans residues 205–250 (KRMLFTSTNDKIKLILANKENVHWTTYMDTFFRTSPMVIATTDMQN).

It belongs to the orthopoxvirus OPG095 family. As to quaternary structure, component of the entry fusion complex (EFC) composed of OPG053, OPG076, OPG086, OPG094, OPG095, OPG099, OPG107, OPG143, OPG104, OPG147 and OPG155. Except for OPG095 and OPG053, each of the EFC proteins is required for assembly or stability of the complex. In terms of processing, myristoylated. Post-translationally, disulfid bonds are oxidized in the cytoplasm by OPG088 protein. Unglycosylated because produced in viral factories instead of the classic ER -Golgi route.

Its subcellular location is the virion membrane. Functionally, component of the entry fusion complex (EFC), which consists of 11 proteins. During cell infection, this complex mediates entry of the virion core into the host cytoplasm by a two-step mechanism consisting of lipid mixing of the viral and cellular membranes and subsequent pore formation. The protein is Entry-fusion complex associated protein OPG095 (OPG099) of Homo sapiens (Human).